We begin with the raw amino-acid sequence, 502 residues long: Alpha-globin transcription factor CP2 (502 aa).

In terms of domain architecture, Grh/CP2 DB spans 61–300; it reads ENKILPFQYV…SPGFNSSHSS (240 aa). Residues 133-395 are DNA-binding; that stretch reads EHQQLEGWRW…VRPRLTIYVC (263 aa). Disordered regions lie at residues 238–268 and 294–325; these read FKPK…YQPS and FNSS…DNLL. The span at 241–265 shows a compositional bias: basic and acidic residues; the sequence is KGADRKQKTDREKMEKRTPHEKEKY. Serine 353 bears the Phosphoserine mark.

The protein belongs to the grh/CP2 family. CP2 subfamily. In terms of assembly, binds to DNA as a dimer, isoform 3 does not bind to DNA or affect the binding of isoform 1 to DNA. Interacts with UBP1 and PIAS1, and is probably part of a complex containing TFCP2, UBP1 and PIAS1. Component of the SSP (stage selector protein) complex, which appears to be a heteromer of TFCP2 and 2 copies of NFE4. As to expression, ubiquitous. Expressed in brain, ovary, kidney, thymus, spleen, liver, adrenal, heart and lung (at protein level).

The protein localises to the nucleus. Binds a variety of cellular and viral promoters including fibrinogen, alpha-globin, SV40 and HIV-1 promoters. Activation of the alpha-globin promoter in erythroid cells is via synergistic interaction with UBP1. Functions as part of the SSP (stage selector protein) complex. Facilitates the interaction of the gamma-globin genes with enhancer elements contained in the locus control region in fetal erythroid cells. Interacts by binding to the stage selector element (SSE) in the proximal gamma-globin promoter. This Homo sapiens (Human) protein is Alpha-globin transcription factor CP2 (TFCP2).